We begin with the raw amino-acid sequence, 127 residues long: Holo-[acyl-carrier-protein] synthase (127 aa).

Positions 9 and 58 each coordinate Mg(2+).

Belongs to the P-Pant transferase superfamily. AcpS family. Mg(2+) is required as a cofactor.

It localises to the cytoplasm. It catalyses the reaction apo-[ACP] + CoA = holo-[ACP] + adenosine 3',5'-bisphosphate + H(+). In terms of biological role, transfers the 4'-phosphopantetheine moiety from coenzyme A to a Ser of acyl-carrier-protein. The chain is Holo-[acyl-carrier-protein] synthase from Shewanella putrefaciens (strain CN-32 / ATCC BAA-453).